Consider the following 143-residue polypeptide: Peptide methionine sulfoxide reductase MsrB (143 aa).

The MsrB domain maps to 16–139; the sequence is DAELRRRLTP…NSAALNFESR (124 aa). Residues cysteine 55, cysteine 58, cysteine 104, and cysteine 107 each coordinate Zn(2+). The active-site Nucleophile is the cysteine 128.

It belongs to the MsrB Met sulfoxide reductase family. Requires Zn(2+) as cofactor.

The catalysed reaction is L-methionyl-[protein] + [thioredoxin]-disulfide + H2O = L-methionyl-(R)-S-oxide-[protein] + [thioredoxin]-dithiol. In Burkholderia ambifaria (strain ATCC BAA-244 / DSM 16087 / CCUG 44356 / LMG 19182 / AMMD) (Burkholderia cepacia (strain AMMD)), this protein is Peptide methionine sulfoxide reductase MsrB.